A 31-amino-acid polypeptide reads, in one-letter code: Putative translational regulatory protein ArgL (31 aa).

In terms of biological role, may serve a regulatory role in expression of downstream gene argF; in an argL-argF-lacZ fusion mutation of the start codon to a stop codon in argL increases expression of beta-galactosidase. The polypeptide is Putative translational regulatory protein ArgL (Escherichia coli (strain K12)).